Reading from the N-terminus, the 629-residue chain is Methyl-accepting chemotaxis protein PctB (629 aa).

The Cytoplasmic segment spans residues 1–10 (MIKSLKFSHK). A helical transmembrane segment spans residues 11–31 (ILLAAALVVIATFSLFTLYND). Over 32–276 (SLQRASIRED…AYAMLTKLRT (245 aa)) the chain is Periplasmic. One can recognise a Cache domain in the interval 37–260 (SIREDLEDYL…LSGLDWYIGI (224 aa)). L-arginine is bound by residues Tyr-109, Ser-115, Tyr-121, 126-128 (RPW), Glu-146, and Asp-173. L-glutamine-binding positions include Ser-115, Tyr-121, 126-128 (RPW), 144-146 (YME), and Asp-173. Residues 277-297 (SAIVAALIAVVAIVLLLGMLI) traverse the membrane as a helical segment. Positions 298–352 (RVLMQPLTDMGRAMQDIAQGEGDLTKRLKVTSNDEFGALAISFNRFVERIHESIR) constitute an HAMP domain. At 298–629 (RVLMQPLTDM…LRQLVDSFKI (332 aa)) the chain is on the cytoplasmic side. Residues 357–593 (TARQLHDVAQ…SLNMDITEIN (237 aa)) form the Methyl-accepting transducer domain. Residues 405 to 424 (RNAADASHHASDANHQAEDG) form a disordered region. A compositionally biased stretch (basic and acidic residues) spans 410–424 (ASHHASDANHQAEDG).

Belongs to the methyl-accepting chemotaxis (MCP) protein family. In terms of assembly, monomer in the absence and presence of ligands.

It localises to the cell inner membrane. Functionally, chemotactic-signal transducers respond to changes in the concentration of attractants and repellents in the environment, transduce a signal from the outside to the inside of the cell, and facilitate sensory adaptation through the variation of the level of methylation. Responds to L-Arg, L-Gln, L-Ala, L-Glu, L-Lys, L-Met and L-Tyr. Also involved in repellent responses to trichloroethylene (TCE), chloroform and methylthiocyanate. This Pseudomonas aeruginosa (strain ATCC 15692 / DSM 22644 / CIP 104116 / JCM 14847 / LMG 12228 / 1C / PRS 101 / PAO1) protein is Methyl-accepting chemotaxis protein PctB (pctB).